A 154-amino-acid polypeptide reads, in one-letter code: Proteinase inhibitor type-2 P303.51 (154 aa).

The first 25 residues, methionine 1–alanine 25, serve as a signal peptide directing secretion. 2 tandem repeats follow at residues alanine 31–lysine 87 and proline 88–lysine 147. 8 cysteine pairs are disulfide-bonded: cysteine 34–cysteine 122, cysteine 38–cysteine 118, cysteine 46–cysteine 128, cysteine 58–cysteine 95, cysteine 61–cysteine 79, cysteine 62–cysteine 91, cysteine 68–cysteine 104, and cysteine 121–cysteine 139.

The protein belongs to the protease inhibitor I20 (potato type II proteinase inhibitor) family.

This chain is Proteinase inhibitor type-2 P303.51, found in Solanum tuberosum (Potato).